A 447-amino-acid polypeptide reads, in one-letter code: Imidazolonepropionase (447 aa).

2 residues coordinate Fe(3+): His-85 and His-87. Residues His-85 and His-87 each contribute to the Zn(2+) site. 3 residues coordinate 4-imidazolone-5-propanoate: Arg-94, Tyr-157, and His-190. An N-formimidoyl-L-glutamate-binding site is contributed by Tyr-157. His-255 is a binding site for Fe(3+). Zn(2+) is bound at residue His-255. Glu-258 contacts 4-imidazolone-5-propanoate. Position 329 (Asp-329) interacts with Fe(3+). Asp-329 lines the Zn(2+) pocket. 2 residues coordinate N-formimidoyl-L-glutamate: Asn-331 and Gly-333. Ser-334 is a binding site for 4-imidazolone-5-propanoate.

The protein belongs to the metallo-dependent hydrolases superfamily. HutI family. The cofactor is Zn(2+). It depends on Fe(3+) as a cofactor.

The protein localises to the cytoplasm. It carries out the reaction 4-imidazolone-5-propanoate + H2O = N-formimidoyl-L-glutamate. It functions in the pathway amino-acid degradation; L-histidine degradation into L-glutamate; N-formimidoyl-L-glutamate from L-histidine: step 3/3. Functionally, catalyzes the hydrolytic cleavage of the carbon-nitrogen bond in imidazolone-5-propanoate to yield N-formimidoyl-L-glutamate. It is the third step in the universal histidine degradation pathway. This Shouchella clausii (strain KSM-K16) (Alkalihalobacillus clausii) protein is Imidazolonepropionase.